The sequence spans 602 residues: Glutathione-regulated potassium-efflux system protein KefB (602 aa).

The next 13 helical transmembrane spans lie at 4–24, 29–49, 55–75, 87–107, 115–135, 152–172, 181–201, 207–227, 230–250, 261–281, 296–318, 326–346, and 356–376; these read TGLLTAVLVFLFAAVVAVPIA, IGAVLGYLIAGIAIGPWGLGF, EILHFSELGVVFLMFIIGLEL, IFGVGAGQVVITAAVLGALLY, AAVIGGVGLAMSSTAMALQLM, VLLFQDMAVIPALALIPILAG, VKIGLKIAAFAGMLIGGRYLL, YIVASGVREVFTAAALLVVLG, LFMDALGLSMALGTFIAGILL, IAIEPFKGLLLGLFFISVGMA, LGVLALVFIKSAILYGLARVFGL, FAGVLSQGGEFAFVLFSAAFS, and ALLLVVVTLSMMTTPLLMQVI. Residues 400–519 form the RCK N-terminal domain; it reads DPQVIIVGFG…NGVKDFTRET (120 aa).

It belongs to the monovalent cation:proton antiporter 2 (CPA2) transporter (TC 2.A.37) family. KefB subfamily. As to quaternary structure, interacts with the regulatory subunit KefG.

The protein resides in the cell inner membrane. Pore-forming subunit of a potassium efflux system that confers protection against electrophiles. Catalyzes K(+)/H(+) antiport. This is Glutathione-regulated potassium-efflux system protein KefB from Yersinia pestis bv. Antiqua (strain Antiqua).